We begin with the raw amino-acid sequence, 539 residues long: Probable methionine--tRNA ligase, mitochondrial (539 aa).

The 'HIGH' region motif lies at 28–38; that stretch reads FYVNAAPHLGH. The short motif at 326-330 is the 'KMSKS' region element; it reads KMSKS. Lysine 329 contacts ATP.

It belongs to the class-I aminoacyl-tRNA synthetase family.

The protein resides in the mitochondrion matrix. The enzyme catalyses tRNA(Met) + L-methionine + ATP = L-methionyl-tRNA(Met) + AMP + diphosphate. This is Probable methionine--tRNA ligase, mitochondrial from Schizosaccharomyces pombe (strain 972 / ATCC 24843) (Fission yeast).